We begin with the raw amino-acid sequence, 551 residues long: MALNIADLAEHAIDAVPDRVALISGGDQLTYGQLEEKANRFAHYLIDQGVKKDDKVGLYCRNRIEIVIAMLGIVKAGAILVNVNFRYVEGELKYLFENSDMVALVHERRYSDRVANVLPETPDIKTILVVEDGSDDDYERFGGVEFYSALEKSSPERDFGPRSEDDIYLLYTGGTTGFPKGVMWRHEDIYRVLFGGTDFATGEPIEDEYGLAKQAAANPPMVRYPIPPMIHGATQSATWMALFAGGTVLLTPEFNPDEVWQAIHDHKVNLLFFTGDAMARPLLDSLLAAKDAGKEYDLSSLFLLASTAALFSTSLKEKFLELLPNRVITDSIGSSETGFGGTSIVAKGQSHTGGPRVTIDKNTVVLDDDGNEVKPGSGVRGVIAKRGHIPLGYYKDEKKTAETFKTINGVRYAIPGDYAEVEADGSVTMLGRGSVSINSGGEKIYPEEVEAALKGHPDVFDALVVGVPDPRFGQHVAAVVHPREGTRPTLAELDAHVRTEIAGYKVPRSLWLVDEIKRSPAGKPDYRWAKDVTEERPADEVHANHVAANAK.

ATP-binding positions include 172-180 (TGGTTGFPK), D417, R432, and K523.

It belongs to the ATP-dependent AMP-binding enzyme family.

It carries out the reaction a medium-chain fatty acid + ATP + CoA = a medium-chain fatty acyl-CoA + AMP + diphosphate. It catalyses the reaction a long-chain fatty acid + ATP + CoA = a long-chain fatty acyl-CoA + AMP + diphosphate. The catalysed reaction is (25S)-3-oxocholest-4-en-26-oate + ATP + CoA = (25S)-3-oxocholest-4-en-26-oyl-CoA + AMP + diphosphate. Its pathway is lipid metabolism; fatty acid biosynthesis. It participates in steroid metabolism; cholesterol metabolism. Its function is as follows. Plays an essential role in degradation of the side chains of C-24 branched-chain sterols. Not essential for degradation of straight chain sterols such as cholesterol. Catalyzes the activation of medium/long-chain fatty acids as acyl-coenzyme A (acyl-CoA), which are then transferred to the multifunctional polyketide synthase (PKS) type III for further chain extension. May be involved in the degradation of cholesterol via the degradation of the side chains of C-24 branched-chain sterols. The polypeptide is Medium/long-chain-fatty-acid--CoA/3-oxocholest-4-en-26-oate--CoA ligase (Mycolicibacterium smegmatis (strain ATCC 700084 / mc(2)155) (Mycobacterium smegmatis)).